Reading from the N-terminus, the 139-residue chain is D-ribose pyranase (139 aa).

The active-site Proton donor is the His20. Residues Asp28, His106, and Tyr128–Asn130 contribute to the substrate site.

It belongs to the RbsD / FucU family. RbsD subfamily. In terms of assembly, homodecamer.

It localises to the cytoplasm. The enzyme catalyses beta-D-ribopyranose = beta-D-ribofuranose. The protein operates within carbohydrate metabolism; D-ribose degradation; D-ribose 5-phosphate from beta-D-ribopyranose: step 1/2. Its function is as follows. Catalyzes the interconversion of beta-pyran and beta-furan forms of D-ribose. This chain is D-ribose pyranase, found in Pectobacterium carotovorum subsp. carotovorum (strain PC1).